The chain runs to 536 residues: CUGBP Elav-like family member 2 (536 aa).

RRM domains follow at residues 58 to 141, 150 to 230, and 451 to 529; these read IKMF…PADS, RKLF…FADT, and ANLF…LKRS.

The protein belongs to the CELF/BRUNOL family.

It is found in the nucleus. The protein resides in the cytoplasm. Its function is as follows. RNA-binding protein implicated in the regulation of several post-transcriptional events. May be involved in pre-mRNA alternative splicing, mRNA translation repression and stability. This chain is CUGBP Elav-like family member 2 (celf2), found in Xenopus laevis (African clawed frog).